The chain runs to 353 residues: uncharacterized protein (353 aa).

The interval 69 to 106 (ISSATPSSTPPATRASSRLQPPKGHQAGGSNSQQQQPS) is disordered. Residues 70–86 (SSATPSSTPPATRASSR) show a composition bias toward low complexity. Residues 319 to 353 (GENKEKKMREMSRVYREMTRQMDDTRRDLDRLNQG) are a coiled coil.

This is an uncharacterized protein from Gibberella zeae (strain ATCC MYA-4620 / CBS 123657 / FGSC 9075 / NRRL 31084 / PH-1) (Wheat head blight fungus).